Consider the following 184-residue polypeptide: Holliday junction branch migration complex subunit RuvA (184 aa).

Positions 1–61 are domain I; the sequence is MIAALRGNIF…ENEYTLYGFA (61 aa). A domain II region spans residues 62 to 135; sequence DKNEKKLFDS…GEFEVVFEEQ (74 aa). Position 135 (Gln-135) is a region of interest, flexible linker. Positions 135 to 184 are domain III; that stretch reads QNPVFNQALSALESLGFNKNDIVKALNGIKSDNLEETIKLALKKLSKDIK.

Belongs to the RuvA family. In terms of assembly, homotetramer. Forms an RuvA(8)-RuvB(12)-Holliday junction (HJ) complex. HJ DNA is sandwiched between 2 RuvA tetramers; dsDNA enters through RuvA and exits via RuvB. An RuvB hexamer assembles on each DNA strand where it exits the tetramer. Each RuvB hexamer is contacted by two RuvA subunits (via domain III) on 2 adjacent RuvB subunits; this complex drives branch migration. In the full resolvosome a probable DNA-RuvA(4)-RuvB(12)-RuvC(2) complex forms which resolves the HJ.

The protein localises to the cytoplasm. Functionally, the RuvA-RuvB-RuvC complex processes Holliday junction (HJ) DNA during genetic recombination and DNA repair, while the RuvA-RuvB complex plays an important role in the rescue of blocked DNA replication forks via replication fork reversal (RFR). RuvA specifically binds to HJ cruciform DNA, conferring on it an open structure. The RuvB hexamer acts as an ATP-dependent pump, pulling dsDNA into and through the RuvAB complex. HJ branch migration allows RuvC to scan DNA until it finds its consensus sequence, where it cleaves and resolves the cruciform DNA. This Nautilia profundicola (strain ATCC BAA-1463 / DSM 18972 / AmH) protein is Holliday junction branch migration complex subunit RuvA.